Here is a 216-residue protein sequence, read N- to C-terminus: Urease accessory protein UreG (216 aa).

Gly24–Thr31 serves as a coordination point for GTP.

The protein belongs to the SIMIBI class G3E GTPase family. UreG subfamily. Homodimer. UreD, UreF and UreG form a complex that acts as a GTP-hydrolysis-dependent molecular chaperone, activating the urease apoprotein by helping to assemble the nickel containing metallocenter of UreC. The UreE protein probably delivers the nickel.

Its subcellular location is the cytoplasm. Its function is as follows. Facilitates the functional incorporation of the urease nickel metallocenter. This process requires GTP hydrolysis, probably effectuated by UreG. This is Urease accessory protein UreG from Variovorax paradoxus (strain S110).